The primary structure comprises 269 residues: 2-dehydro-3-deoxyphosphooctonate aldolase (269 aa).

Belongs to the KdsA family.

The protein resides in the cytoplasm. The catalysed reaction is D-arabinose 5-phosphate + phosphoenolpyruvate + H2O = 3-deoxy-alpha-D-manno-2-octulosonate-8-phosphate + phosphate. It participates in carbohydrate biosynthesis; 3-deoxy-D-manno-octulosonate biosynthesis; 3-deoxy-D-manno-octulosonate from D-ribulose 5-phosphate: step 2/3. It functions in the pathway bacterial outer membrane biogenesis; lipopolysaccharide biosynthesis. The polypeptide is 2-dehydro-3-deoxyphosphooctonate aldolase (Chlamydia abortus (strain DSM 27085 / S26/3) (Chlamydophila abortus)).